The primary structure comprises 473 residues: Bifunctional protein HldE (473 aa).

Positions 1 to 317 (MTHGLPHFTS…LQQALHPRAI (317 aa)) are ribokinase. 195 to 198 (NLAE) contributes to the ATP binding site. Asp-264 is a catalytic residue. Residues 343 to 473 (MTNGCFDILH…SQIIDIIRKN (131 aa)) are cytidylyltransferase.

In the N-terminal section; belongs to the carbohydrate kinase PfkB family. The protein in the C-terminal section; belongs to the cytidylyltransferase family. Homodimer.

It catalyses the reaction D-glycero-beta-D-manno-heptose 7-phosphate + ATP = D-glycero-beta-D-manno-heptose 1,7-bisphosphate + ADP + H(+). The catalysed reaction is D-glycero-beta-D-manno-heptose 1-phosphate + ATP + H(+) = ADP-D-glycero-beta-D-manno-heptose + diphosphate. The protein operates within nucleotide-sugar biosynthesis; ADP-L-glycero-beta-D-manno-heptose biosynthesis; ADP-L-glycero-beta-D-manno-heptose from D-glycero-beta-D-manno-heptose 7-phosphate: step 1/4. It participates in nucleotide-sugar biosynthesis; ADP-L-glycero-beta-D-manno-heptose biosynthesis; ADP-L-glycero-beta-D-manno-heptose from D-glycero-beta-D-manno-heptose 7-phosphate: step 3/4. In terms of biological role, catalyzes the phosphorylation of D-glycero-D-manno-heptose 7-phosphate at the C-1 position to selectively form D-glycero-beta-D-manno-heptose-1,7-bisphosphate. Catalyzes the ADP transfer from ATP to D-glycero-beta-D-manno-heptose 1-phosphate, yielding ADP-D-glycero-beta-D-manno-heptose. The protein is Bifunctional protein HldE of Nitrosococcus oceani (strain ATCC 19707 / BCRC 17464 / JCM 30415 / NCIMB 11848 / C-107).